A 573-amino-acid chain; its full sequence is MKLTQYYLPTLKEAPKDADTISAKLMLRAGLIRKTASGIYEWLPLGLKVLKKVEQIVREEMDAAGAHEVWLPLIQPKELWEESGRWTYYGKELLRIKDRKGAEFCFAPTAEEVITDVVRRDVTSYKQLPVALYQFASKFRDEIRPRFGVMRAREFYMKDAYSFHATEESINEWYLKFFEAYKKVCTRCGFKFKAVEADTGAIGGNFSHEFMVLADTGENEIADCDCGYAANTEKAEIFKPKFPAAKEELKTIEKVNTPNATTIEDVAKMLGQTADRFIKLLVFTADGQPVVALMRGDHELNEHKLKALLKAQELEKANEETYAKVTGSFVGYAGPVGLKEKNPKIKLFADYHVAGIVNGIAGGNEKDVHIINVTPSRDFTPDVYADLKIASEGDLCGKCGKKFNFTRGIEVGHTFKLGTKYSQSMKAEFLDENQKSHPFLMGCYGIGISRIVAAAIEQSHDENGIIWPAPLAPFDIYLVSIDTDINPKVKEETDSIYNQLTQAGLNVLLDDRNERPGIKFKDADLIGLPHRIVISSRTVETGEYEYKQRTSKEAIRRKLADISEQIKEFQASK.

This sequence belongs to the class-II aminoacyl-tRNA synthetase family. ProS type 1 subfamily. In terms of assembly, homodimer.

Its subcellular location is the cytoplasm. It catalyses the reaction tRNA(Pro) + L-proline + ATP = L-prolyl-tRNA(Pro) + AMP + diphosphate. Catalyzes the attachment of proline to tRNA(Pro) in a two-step reaction: proline is first activated by ATP to form Pro-AMP and then transferred to the acceptor end of tRNA(Pro). As ProRS can inadvertently accommodate and process non-cognate amino acids such as alanine and cysteine, to avoid such errors it has two additional distinct editing activities against alanine. One activity is designated as 'pretransfer' editing and involves the tRNA(Pro)-independent hydrolysis of activated Ala-AMP. The other activity is designated 'posttransfer' editing and involves deacylation of mischarged Ala-tRNA(Pro). The misacylated Cys-tRNA(Pro) is not edited by ProRS. In Elusimicrobium minutum (strain Pei191), this protein is Proline--tRNA ligase.